The primary structure comprises 762 residues: Polyadenylate-binding protein, cytoplasmic and nuclear (762 aa).

Residues threonine 39–glutamine 58 form a disordered region. Residues proline 48–glutamine 58 show a composition bias toward low complexity. 4 consecutive RRM domains span residues alanine 61 to arginine 139, glycine 149 to proline 226, threonine 242 to lysine 320, and valine 346 to arginine 470. 3 disordered regions span residues lysine 376–leucine 429, serine 596–proline 663, and valine 740–alanine 762. Over residues glycine 389–serine 425 the composition is skewed to basic and acidic residues. Over residues glycine 600–glutamine 612 the composition is skewed to gly residues. Over residues alanine 645–proline 663 the composition is skewed to low complexity. The region spanning glutamate 664–arginine 741 is the PABC domain. Basic and acidic residues predominate over residues serine 753–alanine 762.

The protein belongs to the polyadenylate-binding protein type-1 family.

The protein localises to the cytoplasm. The protein resides in the nucleus. Binds the poly(A) tail of mRNA. Appears to be an important mediator of the multiple roles of the poly(A) tail in mRNA biogenesis, stability and translation. In the nucleus, involved in both mRNA cleavage and polyadenylation. Is also required for efficient mRNA export to the cytoplasm. Acts in concert with a poly(A)-specific nuclease (PAN) to affect poly(A) tail shortening, which may occur concomitantly with either nucleocytoplasmic mRNA transport or translational initiation. In the cytoplasm, stimulates translation initiation and regulates mRNA decay through translation termination-coupled poly(A) shortening, probably mediated by PAN. This chain is Polyadenylate-binding protein, cytoplasmic and nuclear (PAB1), found in Pyricularia oryzae (strain 70-15 / ATCC MYA-4617 / FGSC 8958) (Rice blast fungus).